We begin with the raw amino-acid sequence, 1343 residues long: DNA-directed RNA polymerase subunit beta (1343 aa).

The protein belongs to the RNA polymerase beta chain family. The RNAP catalytic core consists of 2 alpha, 1 beta, 1 beta' and 1 omega subunit. When a sigma factor is associated with the core the holoenzyme is formed, which can initiate transcription.

It catalyses the reaction RNA(n) + a ribonucleoside 5'-triphosphate = RNA(n+1) + diphosphate. DNA-dependent RNA polymerase catalyzes the transcription of DNA into RNA using the four ribonucleoside triphosphates as substrates. The sequence is that of DNA-directed RNA polymerase subunit beta from Shewanella sp. (strain W3-18-1).